The primary structure comprises 524 residues: MDQEKVIVIDFGGQYNQLVARRVRECNVYCEIYSYKTDLAQIKAMNPKGIILTGGPNSCYEDGAPTCTKELFELGVPVLGLCYGAQLMQHVLGGKVEKAPVREYGKTETFVDKSSALFSDVSEKTIVWMSHFDYISQIAPGFKIVAHTADCPVAAAECTEKNLYAIQFHPEVLHTQEGTKMLHNFVRGVCGCAGTWKMDAFVENTIKEIREKVGSGKVLLALSGGVDSSVAAGLLSRAIGKQLTCVFVDHGLLRKDEGDEVESVFGPEGQFDLNFIRVNAQERYYSKLAGVTEPEAKRKIIGEEFIRVFEEEAKKIGAVDFLAQGTIYPDVVESGLGGESAVIKSHHNVGGLPDFVDFKEIIEPLRNLFKDEVRKAGLELGIPEHLVFRQPFPGPGLGIRIIGEVTADKVRIVQDADFIYRSEVDKAVAEYKKANGKAPAWMPNQYFAALTNMRSVGVMGDERTYDYAVALRAVNTIDFMTAESAEIPFEVLQTVMSRIINEVRGVNRVFYDLTSKPPGTIEFE.

The 191-residue stretch at lysine 5–threonine 195 folds into the Glutamine amidotransferase type-1 domain. Cysteine 82 serves as the catalytic Nucleophile. Residues histidine 169 and glutamate 171 contribute to the active site. Residues tryptophan 196–arginine 389 enclose the GMPS ATP-PPase domain. Serine 223–serine 229 is an ATP binding site.

As to quaternary structure, homodimer.

It carries out the reaction XMP + L-glutamine + ATP + H2O = GMP + L-glutamate + AMP + diphosphate + 2 H(+). Its pathway is purine metabolism; GMP biosynthesis; GMP from XMP (L-Gln route): step 1/1. Its function is as follows. Catalyzes the synthesis of GMP from XMP. In Lachnospira eligens (strain ATCC 27750 / DSM 3376 / VPI C15-48 / C15-B4) (Eubacterium eligens), this protein is GMP synthase [glutamine-hydrolyzing].